Reading from the N-terminus, the 257-residue chain is 3-dehydroquinate dehydratase (257 aa).

3-dehydroquinate contacts are provided by residues 50 to 52 and Arg86; that span reads EWR. The active-site Proton donor/acceptor is the His147. The active-site Schiff-base intermediate with substrate is Lys174. 3-dehydroquinate contacts are provided by Arg216, Ser235, and Gln239.

The protein belongs to the type-I 3-dehydroquinase family. Homodimer.

The enzyme catalyses 3-dehydroquinate = 3-dehydroshikimate + H2O. It functions in the pathway metabolic intermediate biosynthesis; chorismate biosynthesis; chorismate from D-erythrose 4-phosphate and phosphoenolpyruvate: step 3/7. Functionally, involved in the third step of the chorismate pathway, which leads to the biosynthesis of aromatic amino acids. Catalyzes the cis-dehydration of 3-dehydroquinate (DHQ) and introduces the first double bond of the aromatic ring to yield 3-dehydroshikimate. This Geobacillus kaustophilus (strain HTA426) protein is 3-dehydroquinate dehydratase.